The chain runs to 462 residues: Zinc finger CCCH domain-containing protein 8 (462 aa).

6 C3H1-type zinc fingers span residues R105–W133, Q156–E184, R209–D237, R288–R316, R367–D395, and R422–P450.

The polypeptide is Zinc finger CCCH domain-containing protein 8 (Oryza sativa subsp. japonica (Rice)).